Reading from the N-terminus, the 89-residue chain is uncharacterized protein (89 aa).

Residues 31–89 (TPQPLEPHEHPKPMEPNEFDPKPDDPPRNPDPSPFPNEVPKPKPSDFPIPDELYPQPIV) form a disordered region. The segment covering 36-58 (EPHEHPKPMEPNEFDPKPDDPPR) has biased composition (basic and acidic residues). Over residues 59 to 69 (NPDPSPFPNEV) the composition is skewed to pro residues.

This is an uncharacterized protein from Dictyostelium discoideum (Social amoeba).